Here is a 306-residue protein sequence, read N- to C-terminus: Pantothenate kinase (306 aa).

Gly90–Ser97 serves as a coordination point for ATP.

Belongs to the prokaryotic pantothenate kinase family.

Its subcellular location is the cytoplasm. The catalysed reaction is (R)-pantothenate + ATP = (R)-4'-phosphopantothenate + ADP + H(+). Its pathway is cofactor biosynthesis; coenzyme A biosynthesis; CoA from (R)-pantothenate: step 1/5. The sequence is that of Pantothenate kinase (coaA) from Listeria innocua serovar 6a (strain ATCC BAA-680 / CLIP 11262).